A 186-amino-acid polypeptide reads, in one-letter code: Elongation factor P (186 aa).

This sequence belongs to the elongation factor P family.

The protein resides in the cytoplasm. The protein operates within protein biosynthesis; polypeptide chain elongation. In terms of biological role, involved in peptide bond synthesis. Stimulates efficient translation and peptide-bond synthesis on native or reconstituted 70S ribosomes in vitro. Probably functions indirectly by altering the affinity of the ribosome for aminoacyl-tRNA, thus increasing their reactivity as acceptors for peptidyl transferase. In Laribacter hongkongensis (strain HLHK9), this protein is Elongation factor P.